A 480-amino-acid polypeptide reads, in one-letter code: MKLDAPFNLDPNVKVRTRFAPSPTGYLHVGGARTALYSWLYAKHNNGEFVLRIEDTDLERSTPEATAAIIEGMEWLNLPWEHGPYYQTKRFDRYNQVIDEMIEQGLAYRCYCTKEHLEELRHTQEQNKEKPRYDRHCLHDHNHSPDEPHVVRFKNPTEGSVVFDDAVRGRIEISNSELDDLIIRRTDGSPTYNFCVVVDDWDMGITHVVRGEDHINNTPRQINILKAIGAPIPTYAHVSMINGDDGQKLSKRHGAVSVMQYRDDGYLPEALINYLVRLGWGHGDQEIFSREEMINYFELDHVSKSASAFNTEKLQWLNQHYIRELPPEYVAKHLEWHYKDQSIDTSNGPALTDIVSMLAERCKTLKEMASSSRYFFEEFETFDEAAAKKHFKGNAAEALAKVKEKLTALSSWNLHSIHEAIEQTAAELEVGMGKVGMPLRVAVTGSGQSPSMDVTLVGIGRDRVLVRIQRAIDFIHAQNA.

Residues 21-31 carry the 'HIGH' region motif; the sequence is PSPTGYLHVGG. Residues cysteine 110, cysteine 112, cysteine 137, and histidine 139 each contribute to the Zn(2+) site. Residues 248 to 252 carry the 'KMSKS' region motif; sequence KLSKR. Lysine 251 contacts ATP.

The protein belongs to the class-I aminoacyl-tRNA synthetase family. Glutamate--tRNA ligase type 1 subfamily. As to quaternary structure, monomer. Zn(2+) is required as a cofactor.

The protein resides in the cytoplasm. The enzyme catalyses tRNA(Glu) + L-glutamate + ATP = L-glutamyl-tRNA(Glu) + AMP + diphosphate. Catalyzes the attachment of glutamate to tRNA(Glu) in a two-step reaction: glutamate is first activated by ATP to form Glu-AMP and then transferred to the acceptor end of tRNA(Glu). This Haemophilus influenzae (strain 86-028NP) protein is Glutamate--tRNA ligase.